The following is a 367-amino-acid chain: Cyclin-D5-1 (367 aa).

Residues 307-333 (QPTSPASKSTTTTTGKRSSSSSCSEST) form a disordered region.

Belongs to the cyclin family. Cyclin D subfamily.

In Oryza sativa subsp. japonica (Rice), this protein is Cyclin-D5-1 (CYCD5-1).